Reading from the N-terminus, the 472-residue chain is Argininosuccinate lyase (472 aa).

Belongs to the lyase 1 family. Argininosuccinate lyase subfamily.

The protein localises to the cytoplasm. The catalysed reaction is 2-(N(omega)-L-arginino)succinate = fumarate + L-arginine. Its pathway is amino-acid biosynthesis; L-arginine biosynthesis; L-arginine from L-ornithine and carbamoyl phosphate: step 3/3. This is Argininosuccinate lyase from Synechococcus sp. (strain CC9311).